The chain runs to 783 residues: FYN-binding protein 1 (783 aa).

Polar residues-rich tracts occupy residues 1–18 (MAKY…SVNS) and 25–45 (GPNS…QGNA). The interval 1-502 (MAKYNTGGNP…KEKKEQEIKK (502 aa)) is disordered. An N6-acetyllysine modification is found at K3. A phosphoserine mark is found at S28 and S46. A compositionally biased stretch (basic and acidic residues) spans 69-79 (SSEEKPDKEPK). Position 225 is a phosphoserine (S225). 2 stretches are compositionally biased toward basic and acidic residues: residues 240–252 (PARE…DHAG) and 278–290 (NGEE…KIDA). S329 carries the phosphoserine modification. The segment covering 345-363 (KPLPPLFTLGPPPPKPNRP) has biased composition (pro residues). The segment at 348–448 (PPLFTLGPPP…QDGVTHSDGA (101 aa)) is interaction with SKAP1. Over residues 374–387 (TSSGNSTSKGQTSY) the composition is skewed to polar residues. Residues 392–424 (LPPPPPSHPASQPPLPASHPSQPPVPSLPPRNI) show a composition bias toward pro residues. Acidic residues predominate over residues 451-465 (LDEEQDSEGETYEDI). A coiled-coil region spans residues 456-507 (DSEGETYEDIEASKEREKKREKEEKKRLELEKKEQKEKEKKEQEIKKKFKLT). S457 is modified (phosphoserine). Residues 462-465 (YEDI) carry the SH2-binding motif. Basic and acidic residues predominate over residues 466 to 501 (EASKEREKKREKEEKKRLELEKKEQKEKEKKEQEIK). A Nuclear localization signal motif is present at residues 469 to 505 (KEREKKREKEEKKRLELEKKEQKEKEKKEQEIKKKFK). Residues 511 to 572 (QVIHLAKACC…KTTAVEIDYD (62 aa)) form the SH3 1 domain. A Phosphotyrosine modification is found at Y571. S573 and S580 each carry phosphoserine. An SH2-binding; to LCP2 motif is present at residues 595–598 (YDDV). The disordered stretch occupies residues 598–678 (VAEQDDISSH…GTNVGKAKTE (81 aa)). Acidic residues-rich tracts occupy residues 620–635 (PDDD…DADD) and 646–656 (MGDEVYDDVDT). The SH2-binding; to FYN signature appears at 625–628 (YDGI). Residue Y651 is modified to Phosphotyrosine. The short motif at 674 to 700 (KAKTEEKDLKKLKKQEKEEKDFRKKFK) is the Nuclear localization signal element. The SH3 2 domain occupies 700–768 (KYDGEIRVLY…LRSYLADNDG (69 aa)).

In terms of assembly, part of a complex consisting of SKAP2, FYB1 and PTPNS1. Part of a complex consisting of SKAP2, FYB1 and LILRB3. Part of a complex consisting of SKAP1, FYB1 and CLNK. Interacts with CLNK (via its SH2 domain); this interaction allows SKAP1 and FYB1 to recruit FYN to the complex, thus promoting the phosphorylation of CLNK by FYN. Interacts with FYN. Interacts with LCP2. Interacts with SKAP1. Interacts with SKAP2. Interacts with FASLG. Interacts with EVL. Interacts with TMEM47. Interacts with LCK. T-cell receptor ligation leads to increased tyrosine phosphorylation. In terms of tissue distribution, expressed in hematopoietic tissues such as myeloid and T-cells, spleen and thymus. Not expressed in B-cells, nor in non-lymphoid tissues.

The protein resides in the cytoplasm. It is found in the nucleus. It localises to the cell junction. In terms of biological role, acts as an adapter protein of the FYN and LCP2 signaling cascades in T-cells. May play a role in linking T-cell signaling to remodeling of the actin cytoskeleton. Modulates the expression of IL2. Involved in platelet activation. Prevents the degradation of SKAP1 and SKAP2. May be involved in high affinity immunoglobulin epsilon receptor signaling in mast cells. This chain is FYN-binding protein 1, found in Homo sapiens (Human).